Consider the following 149-residue polypeptide: Antitoxin HigA1 (149 aa).

An HTH cro/C1-type domain is found at 42–96 (LIALRKHCQLSQVEVAKRMGVRQPTVSGFEKEPSDPKLSTLQRYARALDARLRLV). Positions 53 to 72 (QVEVAKRMGVRQPTVSGFEK) form a DNA-binding region, H-T-H motif.

As to quaternary structure, interacts with SecB-like chaperone MT2006.

Functionally, antitoxin component of an atypical, type II toxin-antitoxin chaperone (TAC) system. Probably neutralizes the toxic effects of cognate toxin HigB1, which also requires SecB-like chaperone MT2006 (AC Q7D7P7). Autorepresses its operon (higB1-higA1-MT2006). In Mycobacterium tuberculosis (strain CDC 1551 / Oshkosh), this protein is Antitoxin HigA1.